The chain runs to 299 residues: Serine/threonine-protein kinase 1 (299 aa).

Positions 39–277 (IATKPMFEGG…FKGLVSHPWF (239 aa)) constitute a Protein kinase domain. ATP is bound by residues 45–53 (FEGGRRNNV) and lysine 66. Residue aspartate 153 is the Proton acceptor of the active site.

Belongs to the protein kinase superfamily. Ser/Thr protein kinase family.

The protein resides in the virion. It is found in the host cytoplasm. The enzyme catalyses L-seryl-[protein] + ATP = O-phospho-L-seryl-[protein] + ADP + H(+). It catalyses the reaction L-threonyl-[protein] + ATP = O-phospho-L-threonyl-[protein] + ADP + H(+). In terms of biological role, essential for viral replication. It may mediate the virus progression through DNA replication. The chain is Serine/threonine-protein kinase 1 from African swine fever virus (isolate Pig/Kenya/KEN-50/1950) (ASFV).